We begin with the raw amino-acid sequence, 187 residues long: Adenylate kinase 1 (187 aa).

14 to 19 (GSGKGT) serves as a coordination point for ATP. The NMP stretch occupies residues 34 to 63 (STGDMLRQAIADGTELGNQAKGYMDKGELV). AMP is bound by residues Thr-35, Arg-40, 61–63 (ELV), 89–92 (GFPR), and Gln-96. An LID region spans residues 130 to 136 (ARGRADD). ATP is bound at residue Arg-131. Residues Arg-133 and Arg-144 each coordinate AMP. Gln-172 is an ATP binding site.

Belongs to the adenylate kinase family. In terms of assembly, monomer.

The protein resides in the cytoplasm. The catalysed reaction is AMP + ATP = 2 ADP. It participates in purine metabolism; AMP biosynthesis via salvage pathway; AMP from ADP: step 1/1. Functionally, catalyzes the reversible transfer of the terminal phosphate group between ATP and AMP. Plays an important role in cellular energy homeostasis and in adenine nucleotide metabolism. The sequence is that of Adenylate kinase 1 from Synechocystis sp. (strain ATCC 27184 / PCC 6803 / Kazusa).